The sequence spans 409 residues: MSRYVFTSESVTEGHPDKICDQVSDAVLDACLSEDPTSRVACEAVVNTGLCLITGEITSKAEVDFNKLVREVIKNIGYRSASDGGFDANSCAVLVALDQQSSDIAQGVNEAEDHSTDPLDQVGAGDQGIMFGFACDETPELMPLPISLAHRLARRLALVRHQQLIDYLLPDGKTQVSVSYENGVPCSIDTILISTQHKSEVDGITLEEEIQKRIAKDLWKFVVEPATEDLPLKPAKGSTRFLVNPTGKFVIGGPQGDAGLTGRKIIVDTYGGYARHGGGAFSGKDPTKVDRSAAYAARFVAKALVAANLAKKVEVQLSYAIGVAKPISILVDSFGTGKVSDSELTQLVQDQFDLRPGAIIKAFDLQNLPSIRGGRFYRDTAAYGHFGRTDILLPWEDVSQKAKELSLLK.

Histidine 15 serves as a coordination point for ATP. Aspartate 17 is a Mg(2+) binding site. Glutamate 43 provides a ligand contact to K(+). 2 residues coordinate L-methionine: glutamate 56 and glutamine 100. Positions 100–110 (QSSDIAQGVNE) are flexible loop. ATP is bound by residues 171-173 (DGK), 248-249 (KF), aspartate 257, 263-264 (RK), alanine 280, and lysine 284. Residue aspartate 257 coordinates L-methionine. Lysine 288 lines the L-methionine pocket.

The protein belongs to the AdoMet synthase family. In terms of assembly, homotetramer; dimer of dimers. It depends on Mg(2+) as a cofactor. K(+) is required as a cofactor.

It localises to the cytoplasm. The enzyme catalyses L-methionine + ATP + H2O = S-adenosyl-L-methionine + phosphate + diphosphate. It functions in the pathway amino-acid biosynthesis; S-adenosyl-L-methionine biosynthesis; S-adenosyl-L-methionine from L-methionine: step 1/1. Functionally, catalyzes the formation of S-adenosylmethionine (AdoMet) from methionine and ATP. The overall synthetic reaction is composed of two sequential steps, AdoMet formation and the subsequent tripolyphosphate hydrolysis which occurs prior to release of AdoMet from the enzyme. This Prochlorococcus marinus (strain NATL2A) protein is S-adenosylmethionine synthase.